Reading from the N-terminus, the 214-residue chain is Nucleoside triphosphate pyrophosphatase (214 aa).

The Proton acceptor role is filled by aspartate 79.

The protein belongs to the Maf family. A divalent metal cation is required as a cofactor.

It is found in the cytoplasm. The catalysed reaction is a ribonucleoside 5'-triphosphate + H2O = a ribonucleoside 5'-phosphate + diphosphate + H(+). It catalyses the reaction a 2'-deoxyribonucleoside 5'-triphosphate + H2O = a 2'-deoxyribonucleoside 5'-phosphate + diphosphate + H(+). Functionally, nucleoside triphosphate pyrophosphatase. May have a dual role in cell division arrest and in preventing the incorporation of modified nucleotides into cellular nucleic acids. In Rhodococcus opacus (strain B4), this protein is Nucleoside triphosphate pyrophosphatase.